The chain runs to 671 residues: UvrABC system protein C (671 aa).

In terms of domain architecture, GIY-YIG spans 16–95; sequence TTPGVYRFRD…IKEFKPRFNV (80 aa). The UVR domain occupies 207–242; it reads KRFISRLEKDMAAAVAELDYERAAGLRDDIIALRKV.

The protein belongs to the UvrC family. In terms of assembly, interacts with UvrB in an incision complex.

Its subcellular location is the cytoplasm. Functionally, the UvrABC repair system catalyzes the recognition and processing of DNA lesions. UvrC both incises the 5' and 3' sides of the lesion. The N-terminal half is responsible for the 3' incision and the C-terminal half is responsible for the 5' incision. The sequence is that of UvrABC system protein C from Paenarthrobacter aurescens (strain TC1).